The following is a 75-amino-acid chain: Scuwaprin-a (75 aa).

The N-terminal stretch at 1–24 (MSSGGLLLLLGLLTLWAELTPVSG) is a signal peptide. The WAP domain maps to 27–72 (RPKKPGLCPPRPQKPPCVKECKNDWSCPGQQKCCSYGCIDECRDPI). Cystine bridges form between cysteine 34/cysteine 60, cysteine 43/cysteine 64, cysteine 47/cysteine 59, and cysteine 53/cysteine 68.

Belongs to the venom waprin family. As to expression, expressed by the venom gland.

The protein resides in the secreted. Damages membranes of susceptible bacteria. Has no hemolytic activity. Not toxic to mice. Does not inhibit the proteinases elastase and cathepsin G. The polypeptide is Scuwaprin-a (Oxyuranus scutellatus scutellatus (Australian taipan)).